A 166-amino-acid polypeptide reads, in one-letter code: 2-C-methyl-D-erythritol 2,4-cyclodiphosphate synthase (166 aa).

Residues D15 and H17 each coordinate a divalent metal cation. 4-CDP-2-C-methyl-D-erythritol 2-phosphate-binding positions include 15 to 17 (DIH) and 43 to 44 (HS). Residue H51 coordinates a divalent metal cation. 4-CDP-2-C-methyl-D-erythritol 2-phosphate contacts are provided by residues 65-67 (DIG), 141-144 (TTNE), and R151.

It belongs to the IspF family. Homotrimer. A divalent metal cation is required as a cofactor.

The catalysed reaction is 4-CDP-2-C-methyl-D-erythritol 2-phosphate = 2-C-methyl-D-erythritol 2,4-cyclic diphosphate + CMP. Its pathway is isoprenoid biosynthesis; isopentenyl diphosphate biosynthesis via DXP pathway; isopentenyl diphosphate from 1-deoxy-D-xylulose 5-phosphate: step 4/6. Functionally, involved in the biosynthesis of isopentenyl diphosphate (IPP) and dimethylallyl diphosphate (DMAPP), two major building blocks of isoprenoid compounds. Catalyzes the conversion of 4-diphosphocytidyl-2-C-methyl-D-erythritol 2-phosphate (CDP-ME2P) to 2-C-methyl-D-erythritol 2,4-cyclodiphosphate (ME-CPP) with a corresponding release of cytidine 5-monophosphate (CMP). This is 2-C-methyl-D-erythritol 2,4-cyclodiphosphate synthase from Prochlorococcus marinus (strain MIT 9215).